The chain runs to 191 residues: uncharacterized protein (191 aa).

To B.subtilis GlpP.

This is an uncharacterized protein from Escherichia coli (strain K12).